The primary structure comprises 84 residues: ATP synthase subunit c (84 aa).

The next 2 membrane-spanning stretches (helical) occupy residues 10-30 and 53-73; these read IAVA…FAIL and FIVA…ALFF.

It belongs to the ATPase C chain family. In terms of assembly, F-type ATPases have 2 components, F(1) - the catalytic core - and F(0) - the membrane proton channel. F(1) has five subunits: alpha(3), beta(3), gamma(1), delta(1), epsilon(1). F(0) has three main subunits: a(1), b(2) and c(10-14). The alpha and beta chains form an alternating ring which encloses part of the gamma chain. F(1) is attached to F(0) by a central stalk formed by the gamma and epsilon chains, while a peripheral stalk is formed by the delta and b chains.

The protein localises to the cell inner membrane. Functionally, f(1)F(0) ATP synthase produces ATP from ADP in the presence of a proton or sodium gradient. F-type ATPases consist of two structural domains, F(1) containing the extramembraneous catalytic core and F(0) containing the membrane proton channel, linked together by a central stalk and a peripheral stalk. During catalysis, ATP synthesis in the catalytic domain of F(1) is coupled via a rotary mechanism of the central stalk subunits to proton translocation. Key component of the F(0) channel; it plays a direct role in translocation across the membrane. A homomeric c-ring of between 10-14 subunits forms the central stalk rotor element with the F(1) delta and epsilon subunits. This is ATP synthase subunit c from Shewanella putrefaciens (strain CN-32 / ATCC BAA-453).